We begin with the raw amino-acid sequence, 172 residues long: UPF0398 protein gbs0290 (172 aa).

It belongs to the UPF0398 family.

The chain is UPF0398 protein gbs0290 from Streptococcus agalactiae serotype III (strain NEM316).